The chain runs to 206 residues: Adenylate kinase (206 aa).

The segment at 1–21 (MSQPKILLLGAPGAGKGTQSS) is disordered. Residue 13–18 (GAGKGT) coordinates ATP. The segment at 33-61 (TTGDALRANKDMETEHGTPREFMEAGELV) is NMP. Residues Thr34, Arg39, 59–61 (ELV), 84–87 (GYPR), and Gln91 each bind AMP. The interval 120 to 153 (GRRMDPETGDIYHTEFNMPDDEEVRERLVQRDDD) is LID. Residues Arg121 and 130–131 (IY) contribute to the ATP site. Arg150 and Arg161 together coordinate AMP. Position 189 (Ala189) interacts with ATP.

Belongs to the adenylate kinase family. As to quaternary structure, monomer.

It localises to the cytoplasm. The enzyme catalyses AMP + ATP = 2 ADP. It participates in purine metabolism; AMP biosynthesis via salvage pathway; AMP from ADP: step 1/1. Functionally, catalyzes the reversible transfer of the terminal phosphate group between ATP and AMP. Plays an important role in cellular energy homeostasis and in adenine nucleotide metabolism. This chain is Adenylate kinase, found in Natronomonas pharaonis (strain ATCC 35678 / DSM 2160 / CIP 103997 / JCM 8858 / NBRC 14720 / NCIMB 2260 / Gabara) (Halobacterium pharaonis).